The following is a 157-amino-acid chain: Phosphopantetheine adenylyltransferase (157 aa).

Thr-8 contributes to the substrate binding site. ATP is bound by residues 8 to 9 (TF) and His-16. 3 residues coordinate substrate: Lys-40, Thr-72, and Arg-86. Residues 87-89 (GLR), Glu-97, and 122-128 (YSFLSSS) each bind ATP.

Belongs to the bacterial CoaD family. Homohexamer. Mg(2+) is required as a cofactor.

It is found in the cytoplasm. The enzyme catalyses (R)-4'-phosphopantetheine + ATP + H(+) = 3'-dephospho-CoA + diphosphate. It participates in cofactor biosynthesis; coenzyme A biosynthesis; CoA from (R)-pantothenate: step 4/5. Functionally, reversibly transfers an adenylyl group from ATP to 4'-phosphopantetheine, yielding dephospho-CoA (dPCoA) and pyrophosphate. In Prochlorococcus marinus (strain MIT 9301), this protein is Phosphopantetheine adenylyltransferase.